Here is a 758-residue protein sequence, read N- to C-terminus: MRTLTHNLGFPRIGAQRELKKALETYWKGQNDVDQLLATARAIRTGNWLLQQKAGIDLIPVGDFSLYDHILDMTTLLGAIPHRFGNTGDKISPDLYFAMARGTADQPAMEMTKWFNTNYHYIVPEFDDTTQFRLASDRLFQEIEDAKALGITAKAVLIGPLTYLYLGKEVTPGFQRLDLLPRLLPVYREILQKIASLGVEWVQIDEPILSLDLEQPWRDSFAEAYHTLHDGSCRLLLTTYFGTVDHHLTLLKNLPVDGLHIDVSSAPEQLESFLTEDFSGKTLSLGCIDGRNIWRADLSQKLETLSQAASRFAGELWIAPSCSLLHCPVDLALETKLEPEIKNWLAFSAQKLEEMTTLGRGLNQGRESVEAILTASDEARRSRTESSRIHNPIVHQRVDNLTERDSQRNHPFATRKHLQQQRFNLPLLPTTTIGSFPQTATIRQARAAFRKNELSHLEYLSAMRAEIREMIRKQEEIGLDVLVHGEPERNDMVEYFGEQLWGYAFTENGWVQSYGSRCVKPPILYGDVYRPEAMTVEWIKYAQSQTGKPVKGMLTGPVTMLMWSFVRDDQPRSTTALQLALAIRDEVADLENAGIGMIQIDEPAFREGLPLRKQDWKSYLDWAVKAFRVASSGVKDETQIHTHMCYSEFHDILPAIAELDADVITIETSRSRMELLDAFVKFSYPNEIGPGVYDIHSPRVPDASEMFELLKKASRYIDPTLLWVNPDCGLKTRNWPETQTALQKMVDCAKTLRSALQA.

Residues 17–20 (RELK) and K113 each bind 5-methyltetrahydropteroyltri-L-glutamate. L-homocysteine is bound by residues 433 to 435 (IGS) and E486. L-methionine-binding positions include 433 to 435 (IGS) and E486. 5-methyltetrahydropteroyltri-L-glutamate is bound by residues 517–518 (RC) and W563. D601 is an L-homocysteine binding site. L-methionine is bound at residue D601. E607 contributes to the 5-methyltetrahydropteroyltri-L-glutamate binding site. Zn(2+)-binding residues include H643, C645, and E667. Residue H696 is the Proton donor of the active site. C728 serves as a coordination point for Zn(2+).

This sequence belongs to the vitamin-B12 independent methionine synthase family. Requires Zn(2+) as cofactor.

The enzyme catalyses 5-methyltetrahydropteroyltri-L-glutamate + L-homocysteine = tetrahydropteroyltri-L-glutamate + L-methionine. The protein operates within amino-acid biosynthesis; L-methionine biosynthesis via de novo pathway; L-methionine from L-homocysteine (MetE route): step 1/1. Catalyzes the transfer of a methyl group from 5-methyltetrahydrofolate to homocysteine resulting in methionine formation. This chain is 5-methyltetrahydropteroyltriglutamate--homocysteine methyltransferase, found in Nitrosomonas europaea (strain ATCC 19718 / CIP 103999 / KCTC 2705 / NBRC 14298).